We begin with the raw amino-acid sequence, 220 residues long: Putative cobalt transport protein CbiM (220 aa).

6 helical membrane passes run 6–26 (GFLP…VISY), 45–65 (IAVA…SVTG), 74–94 (GIAV…IVLL), 107–127 (TLGA…WVVF), 153–173 (LVTS…AGVV), and 188–208 (IPIG…IAMS).

This sequence belongs to the CbiM family. In terms of assembly, forms an energy-coupling factor (ECF) transporter complex composed of an ATP-binding protein (A component, CbiO), a transmembrane protein (T component, CbiQ) and 2 possible substrate-capture proteins (S components, CbiM and CbiN) of unknown stoichimetry.

It is found in the cell membrane. The protein operates within cofactor biosynthesis; adenosylcobalamin biosynthesis. In terms of biological role, part of the energy-coupling factor (ECF) transporter complex CbiMNOQ involved in cobalt import. The sequence is that of Putative cobalt transport protein CbiM from Halobacterium salinarum (strain ATCC 29341 / DSM 671 / R1).